The following is a 919-amino-acid chain: Probable disease resistance protein At4g27220 (919 aa).

Coiled coils occupy residues 1–30 and 74–95; these read MFRSNARALNRALERLKNVQTKVNEALKRS and VEILEKVKRLEEQGQDLIKKIS. In terms of domain architecture, NB-ARC spans 121–399; the sequence is MLDKLKDCLK…AEGLLDGQHH (279 aa). 141–148 is an ATP binding site; the sequence is GMGGVGKT. 8 LRR repeats span residues 447 to 468, 469 to 492, 494 to 516, 519 to 540, 542 to 564, 565 to 587, 588 to 610, and 611 to 635; these read GEGFHSLVMAGRGLIEFPQDKF, VSSVQRVSLMANKLERLPNNVIEG, ETLVLLLQGNSHVKEVPNGFLQA, NLRILDLSGVRIRTLPDSFSNL, SLRSLVLRNCKKLRNLPSLESLV, KLQFLDLHESAIRELPRGLEALS, SLRYICVSNTYQLQSIPAGTILQ, and LSSLEVLDMAGSAYSWGIKGEEREG.

Belongs to the disease resistance NB-LRR family.

Functionally, probable disease resistance protein. This is Probable disease resistance protein At4g27220 from Arabidopsis thaliana (Mouse-ear cress).